The following is a 153-amino-acid chain: Lipoprotein signal peptidase (153 aa).

2 helical membrane-spanning segments follow: residues 61–81 (YFFV…LVKN) and 85–105 (SLWL…NFID). Residues Asp-114 and Asp-130 contribute to the active site. Residues 125–145 (IFNVADSYLTVGVLLLILILW) form a helical membrane-spanning segment.

This sequence belongs to the peptidase A8 family.

Its subcellular location is the cell membrane. The enzyme catalyses Release of signal peptides from bacterial membrane prolipoproteins. Hydrolyzes -Xaa-Yaa-Zaa-|-(S,diacylglyceryl)Cys-, in which Xaa is hydrophobic (preferably Leu), and Yaa (Ala or Ser) and Zaa (Gly or Ala) have small, neutral side chains.. It functions in the pathway protein modification; lipoprotein biosynthesis (signal peptide cleavage). This protein specifically catalyzes the removal of signal peptides from prolipoproteins. The protein is Lipoprotein signal peptidase of Streptococcus thermophilus (strain CNRZ 1066).